Reading from the N-terminus, the 141-residue chain is U1 small nuclear ribonucleoprotein C (141 aa).

Residues 4-36 form a Matrin-type zinc finger; that stretch reads YYCEYCDKYLTHDSPSVRKSHTIGKVHQQAVTL. The interval 69–141 is disordered; that stretch reads LLPPNMVPGQ…SNSPPSNNDQ (73 aa). A compositionally biased stretch (pro residues) spans 83–97; sequence MMPPGQFPFPPPPGQ. Composition is skewed to low complexity over residues 100-110 and 124-141; these read GGMPPHQQQPM and QQSA…NNDQ.

The protein belongs to the U1 small nuclear ribonucleoprotein C family. Component of the U1 snRNP. The U1 snRNP is composed of the U1 snRNA and the 7 core Sm proteins SNRPB, SNRPD1, SNRPD2, SNRPD3, SNRPE, SNRPF and SNRPG that assemble in a heptameric protein ring on the Sm site of the small nuclear RNA to form the core snRNP, and at least 3 U1 snRNP-specific proteins SNRNP70/U1-70K, SNRPA/U1-A and SNRPC/U1-C. SNRPC/U1-C interacts with U1 snRNA and the 5' splice-site region of the pre-mRNA.

The protein localises to the nucleus. Component of the spliceosomal U1 snRNP, which is essential for recognition of the pre-mRNA 5' splice-site and the subsequent assembly of the spliceosome. SNRPC/U1-C is directly involved in initial 5' splice-site recognition for both constitutive and regulated alternative splicing. The interaction with the 5' splice-site seems to precede base-pairing between the pre-mRNA and the U1 snRNA. Stimulates commitment or early (E) complex formation by stabilizing the base pairing of the 5' end of the U1 snRNA and the 5' splice-site region. The chain is U1 small nuclear ribonucleoprotein C from Heterostelium pallidum (strain ATCC 26659 / Pp 5 / PN500) (Cellular slime mold).